The following is a 277-amino-acid chain: Phosphate import ATP-binding protein PstB (277 aa).

Residues 31 to 272 (IEVPGLSLFY…PAKKQTEDYI (242 aa)) enclose the ABC transporter domain. 63-70 (GPSGCGKS) contacts ATP.

This sequence belongs to the ABC transporter superfamily. Phosphate importer (TC 3.A.1.7) family. In terms of assembly, the complex is composed of two ATP-binding proteins (PstB), two transmembrane proteins (PstC and PstA) and a solute-binding protein (PstS).

Its subcellular location is the cell inner membrane. It carries out the reaction phosphate(out) + ATP + H2O = ADP + 2 phosphate(in) + H(+). Part of the ABC transporter complex PstSACB involved in phosphate import. Responsible for energy coupling to the transport system. This Pseudomonas putida (Arthrobacter siderocapsulatus) protein is Phosphate import ATP-binding protein PstB.